Consider the following 689-residue polypeptide: Glycine--tRNA ligase beta subunit (689 aa).

The protein belongs to the class-II aminoacyl-tRNA synthetase family. In terms of assembly, tetramer of two alpha and two beta subunits.

Its subcellular location is the cytoplasm. The enzyme catalyses tRNA(Gly) + glycine + ATP = glycyl-tRNA(Gly) + AMP + diphosphate. This chain is Glycine--tRNA ligase beta subunit, found in Dictyoglomus turgidum (strain DSM 6724 / Z-1310).